We begin with the raw amino-acid sequence, 259 residues long: Ribosomal RNA small subunit methyltransferase J (259 aa).

Residues 101–102 (RD), 117–118 (ER), 153–154 (SS), and Asp176 contribute to the S-adenosyl-L-methionine site.

This sequence belongs to the methyltransferase superfamily. RsmJ family.

The protein resides in the cytoplasm. It catalyses the reaction guanosine(1516) in 16S rRNA + S-adenosyl-L-methionine = N(2)-methylguanosine(1516) in 16S rRNA + S-adenosyl-L-homocysteine + H(+). Specifically methylates the guanosine in position 1516 of 16S rRNA. The polypeptide is Ribosomal RNA small subunit methyltransferase J (Vibrio campbellii (strain ATCC BAA-1116)).